A 145-amino-acid chain; its full sequence is Basic phospholipase A2 S2-22 (145 aa).

The N-terminal stretch at 1–19 (MYPAHLLVLLAVCVSLLGA) is a signal peptide. The propeptide occupies 20 to 27 (SDIPPQPL). 7 disulfides stabilise this stretch: C38–C99, C54–C144, C56–C72, C71–C127, C78–C120, C88–C113, and C106–C118. Y55, G57, and G59 together coordinate Ca(2+). H75 is an active-site residue. Position 76 (D76) interacts with Ca(2+). Residue D121 is part of the active site.

It belongs to the phospholipase A2 family. Group I subfamily. D49 sub-subfamily. Ca(2+) serves as cofactor. In terms of tissue distribution, expressed by the venom gland.

The protein resides in the secreted. The enzyme catalyses a 1,2-diacyl-sn-glycero-3-phosphocholine + H2O = a 1-acyl-sn-glycero-3-phosphocholine + a fatty acid + H(+). Snake venom phospholipase A2 (PLA2) that inhibits collagen-induced platelet aggregation. PLA2 catalyzes the calcium-dependent hydrolysis of the 2-acyl groups in 3-sn-phosphoglycerides. The protein is Basic phospholipase A2 S2-22 of Austrelaps superbus (Lowland copperhead snake).